A 502-amino-acid polypeptide reads, in one-letter code: Probable glycerol kinase (502 aa).

Position 11 (Thr11) interacts with substrate. Arg15 contributes to the ATP binding site. 3 residues coordinate substrate: Arg85, Tyr140, and Asp246. ATP-binding positions include Thr268, Gly313, and 416–420 (GMIAN).

Belongs to the FGGY kinase family.

It catalyses the reaction glycerol + ATP = sn-glycerol 3-phosphate + ADP + H(+). It functions in the pathway polyol metabolism; glycerol degradation via glycerol kinase pathway; sn-glycerol 3-phosphate from glycerol: step 1/1. This is Probable glycerol kinase from Caenorhabditis elegans.